The primary structure comprises 342 residues: NADPH-dependent methylglyoxal reductase GRE2 (342 aa).

Residues G7–I12, R32, K36, D57–I58, Y165, K169, V199, and S216 each bind NADP(+). Residue K169 is the Proton donor of the active site. S333 carries the post-translational modification Phosphoserine.

The protein belongs to the NAD(P)-dependent epimerase/dehydratase family. Dihydroflavonol-4-reductase subfamily. Monomer. The N-terminus is blocked.

It localises to the cytoplasm. Its subcellular location is the nucleus. It catalyses the reaction (S)-lactaldehyde + NADP(+) = methylglyoxal + NADPH + H(+). The catalysed reaction is 3-methylbutanol + NADP(+) = 3-methylbutanal + NADPH + H(+). The enzyme catalyses 2,5-hexanedione + 2 NADPH + 2 H(+) = (2S,5S)-hexanediol + 2 NADP(+). It carries out the reaction (S)-3-chloro-1-phenyl-1-propanol + NADP(+) = 3-chloro-1-phenyl-1-propanone + NADPH + H(+). With respect to regulation, activated by glutathione. Its function is as follows. Catalyzes the irreversible reduction of the cytotoxic compound methylglyoxal (MG, 2-oxopropanal) to (S)-lactaldehyde as an alternative to detoxification of MG by glyoxalase I GLO1. MG is synthesized via a bypath of glycolysis from dihydroxyacetone phosphate and is believed to play a role in cell cycle regulation and stress adaptation. Also catalyzes the reduction of 3-methylbutanal to 3-methylbutanol. Acts as a suppressor of 3-methylbutanol-induced filamentation by modulating the levels of 3-methylbutanal, the signal to which cells respond by filamentation. Also involved in ergosterol metabolism. This Saccharomyces cerevisiae (strain ATCC 204508 / S288c) (Baker's yeast) protein is NADPH-dependent methylglyoxal reductase GRE2 (GRE2).